Consider the following 93-residue polypeptide: YcgL domain-containing protein swp_2294 (93 aa).

The 85-residue stretch at 1–85 (MICAVYKSLR…PVVNLLEQHK (85 aa)) folds into the YcgL domain.

The protein is YcgL domain-containing protein swp_2294 of Shewanella piezotolerans (strain WP3 / JCM 13877).